The chain runs to 490 residues: Aspartyl/glutamyl-tRNA(Asn/Gln) amidotransferase subunit B (490 aa).

The protein belongs to the GatB/GatE family. GatB subfamily. As to quaternary structure, heterotrimer of A, B and C subunits.

It carries out the reaction L-glutamyl-tRNA(Gln) + L-glutamine + ATP + H2O = L-glutaminyl-tRNA(Gln) + L-glutamate + ADP + phosphate + H(+). It catalyses the reaction L-aspartyl-tRNA(Asn) + L-glutamine + ATP + H2O = L-asparaginyl-tRNA(Asn) + L-glutamate + ADP + phosphate + 2 H(+). In terms of biological role, allows the formation of correctly charged Asn-tRNA(Asn) or Gln-tRNA(Gln) through the transamidation of misacylated Asp-tRNA(Asn) or Glu-tRNA(Gln) in organisms which lack either or both of asparaginyl-tRNA or glutaminyl-tRNA synthetases. The reaction takes place in the presence of glutamine and ATP through an activated phospho-Asp-tRNA(Asn) or phospho-Glu-tRNA(Gln). The chain is Aspartyl/glutamyl-tRNA(Asn/Gln) amidotransferase subunit B from Methylorubrum populi (strain ATCC BAA-705 / NCIMB 13946 / BJ001) (Methylobacterium populi).